Reading from the N-terminus, the 352-residue chain is MGKTKAFNDTFLKACKGEKTDHVPAWYMRQAGRSQPEYRALKEKYGLFEITHQPELCAYVTRLPVEQYGVDAAILYKDIMTPLPAIGVDVEIKNGIGPVIDSPIRTKADIERLGELHPEEDLPYVLDTIQLLTKEQLNVPLIGFAGAPFTMASYMIEGGPSKNYHKTKALMYSEPETWMLLMNKLADMTITYIRAQVKAGVSAFQIFDSWVGALNAADYRTFIKPVMQRIFTELKSENVPMIMYGVGASHLVKDWHDLPLDVVGLDWRMSVDEARKEGLTKTLQGNLDPTILLSPWEVIEERAKDILDQGMKSDHFIFNLGHGVFPDVSPDTLKKLTDFIHDYSAKHKKSSI.

Residues 29-33 (RQAGR), Phe48, Asp78, Tyr154, Ser209, and His322 each bind substrate.

This sequence belongs to the uroporphyrinogen decarboxylase family. As to quaternary structure, homodimer.

The protein resides in the cytoplasm. It carries out the reaction uroporphyrinogen III + 4 H(+) = coproporphyrinogen III + 4 CO2. The protein operates within porphyrin-containing compound metabolism; protoporphyrin-IX biosynthesis; coproporphyrinogen-III from 5-aminolevulinate: step 4/4. Functionally, catalyzes the decarboxylation of four acetate groups of uroporphyrinogen-III to yield coproporphyrinogen-III. This is Uroporphyrinogen decarboxylase from Bacillus pumilus (strain SAFR-032).